Here is a 284-residue protein sequence, read N- to C-terminus: 2-dehydro-3-deoxyphosphooctonate aldolase (284 aa).

This sequence belongs to the KdsA family.

It is found in the cytoplasm. The catalysed reaction is D-arabinose 5-phosphate + phosphoenolpyruvate + H2O = 3-deoxy-alpha-D-manno-2-octulosonate-8-phosphate + phosphate. It participates in carbohydrate biosynthesis; 3-deoxy-D-manno-octulosonate biosynthesis; 3-deoxy-D-manno-octulosonate from D-ribulose 5-phosphate: step 2/3. Its pathway is bacterial outer membrane biogenesis; lipopolysaccharide biosynthesis. This is 2-dehydro-3-deoxyphosphooctonate aldolase from Pectobacterium atrosepticum (strain SCRI 1043 / ATCC BAA-672) (Erwinia carotovora subsp. atroseptica).